The chain runs to 157 residues: Small ribosomal subunit protein uS7 (157 aa).

It belongs to the universal ribosomal protein uS7 family. As to quaternary structure, part of the 30S ribosomal subunit. Contacts proteins S9 and S11.

Its function is as follows. One of the primary rRNA binding proteins, it binds directly to 16S rRNA where it nucleates assembly of the head domain of the 30S subunit. Is located at the subunit interface close to the decoding center, probably blocks exit of the E-site tRNA. The protein is Small ribosomal subunit protein uS7 of Acidovorax ebreus (strain TPSY) (Diaphorobacter sp. (strain TPSY)).